The sequence spans 485 residues: MSSPSPSSEAAAAHHHHHQRRQHAGAAGGSGLVPLAALIKEEARAERPMGSGSRICARDEEDGGGGGGAEGGRRWRRPLLRYGCAAQSKKGEDFFLLRTDCARPSTSSSSSSSLASSPPHTFAVFAVLDGHNGNAAAIYTRDNLLNHVLSAMPRGLSREEWLHALPRALVAGFVKTDKEFQHKGQTSGTTATFVIIDGWTITVASVGDSRCILDAQGGAVSLLTVDHRLEENVEERERVTASGGEVGRLSVVGGAEIGPLRCWPGGLCLSRSIGDIDVGEFIVPVPYVKQVKLSNAGGRLIIASDGIWDALSSEAAAKCCRGLPAELAAKQVVKEALRTRGLKDDTTCIVVDMIPPDQTIRHPSPPKKINKLKSLIFRKKTKDHPNKLTKQLSAAGMVEELFEEGSAMLSERLGNDSSGRRTSSSLFTCAICQVDLEPSEGISVHAGSIFSSSSSKPWEGPFLCSDCRDKKDAMEGKRPSGVKVL.

Positions 1–11 (MSSPSPSSEAA) are enriched in low complexity. Disordered regions lie at residues 1–29 (MSSP…AAGG) and 43–72 (ARAE…AEGG). Over residues 13–23 (AHHHHHQRRQH) the composition is skewed to basic residues. The PPM-type phosphatase domain maps to 107 to 353 (SSSSSSSLAS…DDTTCIVVDM (247 aa)). Mn(2+) is bound by residues aspartate 129, glycine 130, aspartate 305, and aspartate 344.

The protein belongs to the PP2C family. Mg(2+) serves as cofactor. Mn(2+) is required as a cofactor.

The enzyme catalyses O-phospho-L-seryl-[protein] + H2O = L-seryl-[protein] + phosphate. The catalysed reaction is O-phospho-L-threonyl-[protein] + H2O = L-threonyl-[protein] + phosphate. This chain is Probable protein phosphatase 2C 3, found in Oryza sativa subsp. japonica (Rice).